A 176-amino-acid polypeptide reads, in one-letter code: Ribosome maturation factor RimM (176 aa).

In terms of domain architecture, PRC barrel spans 100 to 173 (EGEFHLLDLV…WLRLTPPPGL (74 aa)).

It belongs to the RimM family. As to quaternary structure, binds ribosomal protein uS19.

The protein resides in the cytoplasm. An accessory protein needed during the final step in the assembly of 30S ribosomal subunit, possibly for assembly of the head region. Essential for efficient processing of 16S rRNA. May be needed both before and after RbfA during the maturation of 16S rRNA. It has affinity for free ribosomal 30S subunits but not for 70S ribosomes. This Prochlorococcus marinus (strain MIT 9313) protein is Ribosome maturation factor RimM.